The sequence spans 81 residues: Cytotoxin 1 (81 aa).

Positions 1 to 21 (MKTLLLTLVVVTIVCLDLGYT) are cleaved as a signal peptide. Disulfide bonds link cysteine 24/cysteine 42, cysteine 35/cysteine 59, cysteine 63/cysteine 74, and cysteine 75/cysteine 80.

It belongs to the three-finger toxin family. Short-chain subfamily. Type IA cytotoxin sub-subfamily. Monomer in solution; homodimer and oligomer in the presence of negatively charged lipids forming a pore with a size ranging between 20 and 30 Angstroms. In terms of tissue distribution, expressed by the venom gland.

It localises to the secreted. It is found in the target cell membrane. Shows cytolytic activity on many different cells by forming pores in lipid membranes. Exhibits concentration-dependent growth inhibitory effects in the lung cell lines A549 (IC(50)= 0.88) and NL20 (IC(50)= 1.91), in the prostate cell lines PC-3 (IC(50)= 3.13 ug/ml) and RWPE-1 (IC(50)=0.35 ug/ml), and in the breast cell lines MCF-7 (IC(50)= 9.10 ug/ml) and 184B5 (IC(50)=6.21 ug/ml), with high selectivity for the lung cancer cell line A549 (selectivity index=2.17). Induces primarily necrosis in the A549 lung cancer cell line, and mainly caspase-independent late apoptosis in the breast cancer cells line MCF-7 and in the prostate cancer cell line PC-3. The chain is Cytotoxin 1 from Naja sumatrana (Equatorial spitting cobra).